A 497-amino-acid chain; its full sequence is Acetyl-coenzyme A carboxylase carboxyl transferase subunit beta, chloroplastic (497 aa).

A CoA carboxyltransferase N-terminal domain is found at 225–497; the sequence is LWVQCENCYG…LHGFLPLNQD (273 aa). Residues C229, C232, C248, and C251 each contribute to the Zn(2+) site. Residues 229 to 251 form a C4-type zinc finger; sequence CENCYGLNYKKFFSSKMNICEYC.

It belongs to the AccD/PCCB family. As to quaternary structure, acetyl-CoA carboxylase is a heterohexamer composed of biotin carboxyl carrier protein, biotin carboxylase and 2 subunits each of ACCase subunit alpha and ACCase plastid-coded subunit beta (accD). Requires Zn(2+) as cofactor.

The protein resides in the plastid. It is found in the chloroplast stroma. The enzyme catalyses N(6)-carboxybiotinyl-L-lysyl-[protein] + acetyl-CoA = N(6)-biotinyl-L-lysyl-[protein] + malonyl-CoA. It functions in the pathway lipid metabolism; malonyl-CoA biosynthesis; malonyl-CoA from acetyl-CoA: step 1/1. Component of the acetyl coenzyme A carboxylase (ACC) complex. Biotin carboxylase (BC) catalyzes the carboxylation of biotin on its carrier protein (BCCP) and then the CO(2) group is transferred by the transcarboxylase to acetyl-CoA to form malonyl-CoA. This Phalaenopsis aphrodite subsp. formosana (Moth orchid) protein is Acetyl-coenzyme A carboxylase carboxyl transferase subunit beta, chloroplastic.